Here is a 331-residue protein sequence, read N- to C-terminus: Lipoyl synthase (331 aa).

[4Fe-4S] cluster contacts are provided by C57, C62, C68, C83, C87, C90, and S294. In terms of domain architecture, Radical SAM core spans 69–283; sequence WEDREATFLI…KAEAEAIGFL (215 aa).

This sequence belongs to the radical SAM superfamily. Lipoyl synthase family. It depends on [4Fe-4S] cluster as a cofactor.

It localises to the cytoplasm. It carries out the reaction [[Fe-S] cluster scaffold protein carrying a second [4Fe-4S](2+) cluster] + N(6)-octanoyl-L-lysyl-[protein] + 2 oxidized [2Fe-2S]-[ferredoxin] + 2 S-adenosyl-L-methionine + 4 H(+) = [[Fe-S] cluster scaffold protein] + N(6)-[(R)-dihydrolipoyl]-L-lysyl-[protein] + 4 Fe(3+) + 2 hydrogen sulfide + 2 5'-deoxyadenosine + 2 L-methionine + 2 reduced [2Fe-2S]-[ferredoxin]. It functions in the pathway protein modification; protein lipoylation via endogenous pathway; protein N(6)-(lipoyl)lysine from octanoyl-[acyl-carrier-protein]: step 2/2. Its function is as follows. Catalyzes the radical-mediated insertion of two sulfur atoms into the C-6 and C-8 positions of the octanoyl moiety bound to the lipoyl domains of lipoate-dependent enzymes, thereby converting the octanoylated domains into lipoylated derivatives. This chain is Lipoyl synthase, found in Clavibacter michiganensis subsp. michiganensis (strain NCPPB 382).